The following is a 313-amino-acid chain: GTPase Era (313 aa).

The Era-type G domain occupies 20-187 (RSGFVALIGA…MDYLAETLPE (168 aa)). The G1 stretch occupies residues 28–35 (GATNAGKS). 28–35 (GATNAGKS) provides a ligand contact to GTP. A G2 region spans residues 54 to 58 (QTTRA). The tract at residues 75–78 (DTPG) is G3. Residues 75 to 79 (DTPGI) and 137 to 140 (NKVD) each bind GTP. The tract at residues 137–140 (NKVD) is G4. Residues 166–168 (ISA) form a G5 region. Residues 218–295 (LHQELPYASH…HLFLFVKVRE (78 aa)) form the KH type-2 domain.

It belongs to the TRAFAC class TrmE-Era-EngA-EngB-Septin-like GTPase superfamily. Era GTPase family. Monomer.

Its subcellular location is the cytoplasm. It localises to the cell inner membrane. In terms of biological role, an essential GTPase that binds both GDP and GTP, with rapid nucleotide exchange. Plays a role in 16S rRNA processing and 30S ribosomal subunit biogenesis and possibly also in cell cycle regulation and energy metabolism. The chain is GTPase Era from Rhizobium meliloti (strain 1021) (Ensifer meliloti).